A 511-amino-acid polypeptide reads, in one-letter code: Glucans biosynthesis protein G (511 aa).

Positions 1 to 22 (MMKMRWLSAAVMLTLYTSSSWA) are cleaved as a signal peptide.

It belongs to the OpgD/OpgG family.

The protein resides in the periplasm. It functions in the pathway glycan metabolism; osmoregulated periplasmic glucan (OPG) biosynthesis. Functionally, involved in the biosynthesis of osmoregulated periplasmic glucans (OPGs). This chain is Glucans biosynthesis protein G, found in Shigella boydii serotype 4 (strain Sb227).